A 416-amino-acid polypeptide reads, in one-letter code: RNA polymerase sigma factor SigA (416 aa).

The interval 184–254 is sigma-70 factor domain-2; it reads MVQSNLRLVV…TRAIADQSRT (71 aa). The Interaction with polymerase core subunit RpoC signature appears at 208–211; sequence DLIQ. A sigma-70 factor domain-3 region spans residues 263-338; the sequence is ETISRIKKTT…EADGETPEDE (76 aa). The sigma-70 factor domain-4 stretch occupies residues 351–404; that stretch reads VLDTLSPRERDVLRLRYGLDDGRMKTLEEIGQIFNVTRERIRQIEAKALRKLRH. The segment at residues 377 to 396 is a DNA-binding region (H-T-H motif); the sequence is LEEIGQIFNVTRERIRQIEA.

The protein belongs to the sigma-70 factor family. RpoD/SigA subfamily. Interacts transiently with the RNA polymerase catalytic core.

It localises to the cytoplasm. Functionally, sigma factors are initiation factors that promote the attachment of RNA polymerase to specific initiation sites and are then released. This sigma factor is the primary sigma factor during exponential growth. This Microcystis aeruginosa protein is RNA polymerase sigma factor SigA.